The chain runs to 65 residues: Large ribosomal subunit protein bL35 (65 aa).

Belongs to the bacterial ribosomal protein bL35 family.

The chain is Large ribosomal subunit protein bL35 from Thermotoga neapolitana (strain ATCC 49049 / DSM 4359 / NBRC 107923 / NS-E).